We begin with the raw amino-acid sequence, 891 residues long: Alanine--tRNA ligase (891 aa).

Zn(2+) is bound by residues His-564, His-568, Cys-681, and His-685.

This sequence belongs to the class-II aminoacyl-tRNA synthetase family. Requires Zn(2+) as cofactor.

The protein resides in the cytoplasm. It catalyses the reaction tRNA(Ala) + L-alanine + ATP = L-alanyl-tRNA(Ala) + AMP + diphosphate. Functionally, catalyzes the attachment of alanine to tRNA(Ala) in a two-step reaction: alanine is first activated by ATP to form Ala-AMP and then transferred to the acceptor end of tRNA(Ala). Also edits incorrectly charged Ser-tRNA(Ala) and Gly-tRNA(Ala) via its editing domain. The protein is Alanine--tRNA ligase of Methylorubrum populi (strain ATCC BAA-705 / NCIMB 13946 / BJ001) (Methylobacterium populi).